Reading from the N-terminus, the 85-residue chain is CDC42 small effector protein homolog (85 aa).

2 S-palmitoyl cysteine lipidation sites follow: C14 and C15. A CRIB domain is found at 37 to 50 (IGNPTNFVHTGHIG). Phosphoserine occurs at positions 78 and 81.

The protein belongs to the CDC42SE/SPEC family.

The protein localises to the cytoplasm. The protein resides in the cytoskeleton. It localises to the cell membrane. In terms of biological role, probably involved in the organization of the actin cytoskeleton by acting downstream of CDC42, inducing actin filament assembly. This chain is CDC42 small effector protein homolog (Spec2), found in Drosophila melanogaster (Fruit fly).